Consider the following 177-residue polypeptide: MDLTGPIHDILVVFLGLVLILGGLGVVLFTNPIYSAFSLGLVLICVSLFYILLNSYFVAAAQLLIYVGAINVLILFAVMFMKGSEYSNDLNLWTVGDGVTSLVCTSILFLLISTISDTSWYGIIWTTKANHIIEQDLISNVQQIGIHLSTDFFLPFELISIILLVALIGAISMARQN.

5 consecutive transmembrane segments (helical) span residues 10–30 (ILVV…VLFT), 33–53 (IYSA…YILL), 61–81 (AQLL…VMFM), 92–112 (LWTV…FLLI), and 152–172 (FFLP…GAIS).

The protein belongs to the complex I subunit 6 family. As to quaternary structure, NDH is composed of at least 16 different subunits, 5 of which are encoded in the nucleus.

The protein resides in the plastid. It is found in the chloroplast thylakoid membrane. It carries out the reaction a plastoquinone + NADH + (n+1) H(+)(in) = a plastoquinol + NAD(+) + n H(+)(out). The catalysed reaction is a plastoquinone + NADPH + (n+1) H(+)(in) = a plastoquinol + NADP(+) + n H(+)(out). In terms of biological role, NDH shuttles electrons from NAD(P)H:plastoquinone, via FMN and iron-sulfur (Fe-S) centers, to quinones in the photosynthetic chain and possibly in a chloroplast respiratory chain. The immediate electron acceptor for the enzyme in this species is believed to be plastoquinone. Couples the redox reaction to proton translocation, and thus conserves the redox energy in a proton gradient. In Lemna minor (Common duckweed), this protein is NAD(P)H-quinone oxidoreductase subunit 6, chloroplastic (ndhG).